We begin with the raw amino-acid sequence, 535 residues long: Prolyl 4-hydroxylase subunit alpha-2 (535 aa).

Positions 1 to 21 (MKLWVSALLMAWFGVLSCVQA) are cleaved as a signal peptide. The N-linked (GlcNAc...) asparagine glycan is linked to Asn115. One copy of the TPR repeat lies at 207 to 240 (SQVLDYLSYAVFQLGDLHRALELTRRLLSLDPSH). N-linked (GlcNAc...) asparagine glycosylation is present at Asn264. The 109-residue stretch at 412–520 (TAELLQVANY…KWVSNKWFHE (109 aa)) folds into the Fe2OG dioxygenase domain. 2 residues coordinate Fe cation: His430 and Asp432. At Lys480 the chain carries N6-succinyllysine. His501 contacts Fe cation. 2-oxoglutarate is bound at residue Lys511.

Belongs to the P4HA family. Heterotetramer of two alpha-2 chains and two beta chains (P4HB) (the beta chain is the multi-functional PDI), where P4HB plays the role of a structural subunit; this tetramer catalyzes the formation of 4-hydroxyproline in collagen. The cofactor is Fe(2+). L-ascorbate serves as cofactor. As to expression, expressed in the heart, placenta, lung and pancreas.

It localises to the endoplasmic reticulum lumen. The enzyme catalyses L-prolyl-[collagen] + 2-oxoglutarate + O2 = trans-4-hydroxy-L-prolyl-[collagen] + succinate + CO2. Its activity is regulated as follows. Inhibited by poly(L-proline) only at very high concentrations. In terms of biological role, catalyzes the post-translational formation of 4-hydroxyproline in -Xaa-Pro-Gly- sequences in collagens and other proteins. The sequence is that of Prolyl 4-hydroxylase subunit alpha-2 (P4HA2) from Homo sapiens (Human).